The sequence spans 118 residues: NAD(P)H-quinone oxidoreductase subunit M (118 aa).

The protein belongs to the complex I NdhM subunit family. In terms of assembly, NDH-1 can be composed of about 15 different subunits; different subcomplexes with different compositions have been identified which probably have different functions.

The protein localises to the cellular thylakoid membrane. The enzyme catalyses a plastoquinone + NADH + (n+1) H(+)(in) = a plastoquinol + NAD(+) + n H(+)(out). It catalyses the reaction a plastoquinone + NADPH + (n+1) H(+)(in) = a plastoquinol + NADP(+) + n H(+)(out). Its function is as follows. NDH-1 shuttles electrons from an unknown electron donor, via FMN and iron-sulfur (Fe-S) centers, to quinones in the respiratory and/or the photosynthetic chain. The immediate electron acceptor for the enzyme in this species is believed to be plastoquinone. Couples the redox reaction to proton translocation, and thus conserves the redox energy in a proton gradient. Cyanobacterial NDH-1 also plays a role in inorganic carbon-concentration. The chain is NAD(P)H-quinone oxidoreductase subunit M from Rippkaea orientalis (strain PCC 8801 / RF-1) (Cyanothece sp. (strain PCC 8801)).